Consider the following 119-residue polypeptide: Fluoride-specific ion channel FluC (119 aa).

Helical transmembrane passes span 5 to 25 (ILPL…LNLA), 30 to 50 (LSPA…IGIF), 59 to 79 (WKLL…GFSL), and 92 to 112 (SALA…WLGL). Na(+) is bound by residues G69 and T72.

The protein belongs to the fluoride channel Fluc/FEX (TC 1.A.43) family.

The protein resides in the cell inner membrane. The enzyme catalyses fluoride(in) = fluoride(out). Na(+) is not transported, but it plays an essential structural role and its presence is essential for fluoride channel function. Functionally, fluoride-specific ion channel. Important for reducing fluoride concentration in the cell, thus reducing its toxicity. The chain is Fluoride-specific ion channel FluC from Neisseria gonorrhoeae (strain NCCP11945).